Reading from the N-terminus, the 350-residue chain is Biotin synthase (350 aa).

Residues 63 to 281 enclose the Radical SAM core domain; the sequence is GDIELATLLS…IAVARITMPK (219 aa). [4Fe-4S] cluster-binding residues include cysteine 78, cysteine 82, and cysteine 85. 4 residues coordinate [2Fe-2S] cluster: cysteine 122, cysteine 153, cysteine 213, and arginine 285.

This sequence belongs to the radical SAM superfamily. Biotin synthase family. In terms of assembly, homodimer. The cofactor is [4Fe-4S] cluster. Requires [2Fe-2S] cluster as cofactor.

It catalyses the reaction (4R,5S)-dethiobiotin + (sulfur carrier)-SH + 2 reduced [2Fe-2S]-[ferredoxin] + 2 S-adenosyl-L-methionine = (sulfur carrier)-H + biotin + 2 5'-deoxyadenosine + 2 L-methionine + 2 oxidized [2Fe-2S]-[ferredoxin]. Its pathway is cofactor biosynthesis; biotin biosynthesis; biotin from 7,8-diaminononanoate: step 2/2. Its function is as follows. Catalyzes the conversion of dethiobiotin (DTB) to biotin by the insertion of a sulfur atom into dethiobiotin via a radical-based mechanism. The sequence is that of Biotin synthase from Acidovorax sp. (strain JS42).